The following is a 472-amino-acid chain: MAPFSRPHHPMIRTRFAPSPTGYLHIGGARTALFSWAFARHHGGQFVLRIEDTDIARSTPEAVQAILDGMAWLDLNHDEGPFYQTQRLYRYKEVIEQMLASGDAYHCYCSTEELDEMREAQRARGEKPRYDGRWRPEPGKTLPVPPSGVQPVVRFRNPTDGTVAWKDLVKGTIEFSNAELDDLIIARADGTPTYNFCVVVDDWDMRITHVIRGDDHVNNTPRQINILKALGATVPEYAHLSMILGDDGTKLSKRHGAVSVMQYFEEGYLPEAVINYLARLGWSHGDAELFDREQFVEWFDLDHITPSAAQFNTEKLRWLNQQYIKAADDTRLAGLARPFLIRNGATLDDGPDLAAVCALVKERAATIEALADAATLFYRVLHPTPELLAQHVTAEVRPALADLATRLETLEWERGAISAAFKETLAAHGLKMPKLAMPVRVLVTGEPQTPAIDATLELLGREKVLDRLRAAL.

The short motif at 18-28 (PSPTGYLHIGG) is the 'HIGH' region element. Residues 122–138 (RARGEKPRYDGRWRPEP) show a composition bias toward basic and acidic residues. The tract at residues 122-150 (RARGEKPRYDGRWRPEPGKTLPVPPSGVQ) is disordered. The 'KMSKS' region signature appears at 250–254 (KLSKR). K253 contributes to the ATP binding site.

Belongs to the class-I aminoacyl-tRNA synthetase family. Glutamate--tRNA ligase type 1 subfamily. As to quaternary structure, monomer.

The protein localises to the cytoplasm. It carries out the reaction tRNA(Glu) + L-glutamate + ATP = L-glutamyl-tRNA(Glu) + AMP + diphosphate. Its function is as follows. Catalyzes the attachment of glutamate to tRNA(Glu) in a two-step reaction: glutamate is first activated by ATP to form Glu-AMP and then transferred to the acceptor end of tRNA(Glu). The protein is Glutamate--tRNA ligase of Thiobacillus denitrificans (strain ATCC 25259 / T1).